We begin with the raw amino-acid sequence, 310 residues long: Olfactory receptor 4K14 (310 aa).

Topologically, residues 1-25 (MDPQNYSLVSEFVLHGLCTSRHLQN) are extracellular. The N-linked (GlcNAc...) asparagine glycan is linked to Asn-5. Residues 26–49 (FFFIFFFGVYVAIMLGNLLILVTV) form a helical membrane-spanning segment. At 50–58 (ISDPCLHSS) the chain is on the cytoplasmic side. Residues 59-80 (PMYFLLGNLAFLDMWLASFATP) traverse the membrane as a helical segment. Topologically, residues 81 to 101 (KMIRDFLSDQKLISFGGCMAQ) are extracellular. A disulfide bond links Cys-98 and Cys-190. A helical membrane pass occupies residues 102–121 (IFFLHFTGGAEMVLLVSMAY). Topologically, residues 122–140 (DRYVAICKPLHYMTLMSWQ) are cytoplasmic. The helical transmembrane segment at 141 to 159 (TCIRLVLASWVVGFVHSIS) threads the bilayer. Over 160–196 (QVAFTVNLPYCGPNEVDSFFCDLPLVIKLACMDTYVL) the chain is Extracellular. The chain crosses the membrane as a helical span at residues 197–220 (GIIMISDSGLLSLSCFLLLLISYT). The Cytoplasmic portion of the chain corresponds to 221–236 (VILLAIRQRAAGSTSK). The chain crosses the membrane as a helical span at residues 237–259 (ALSTCSAHIMVVTLFFGPCIFVY). Topologically, residues 260–270 (VRPFSRFSVDK) are extracellular. The helical transmembrane segment at 271 to 290 (LLSVFYTIFTPLLNPIIYTL) threads the bilayer. Residues 291–310 (RNEEMKAAMKKLQNRRVTFQ) lie on the Cytoplasmic side of the membrane.

It belongs to the G-protein coupled receptor 1 family.

Its subcellular location is the cell membrane. Its function is as follows. Odorant receptor. The polypeptide is Olfactory receptor 4K14 (OR4K14) (Homo sapiens (Human)).